The chain runs to 449 residues: Xylose isomerase (449 aa).

Catalysis depends on residues His-101 and Asp-104. Positions 232, 268, 271, 296, 307, 309, and 340 each coordinate Mg(2+).

This sequence belongs to the xylose isomerase family. As to quaternary structure, homotetramer. The cofactor is Mg(2+).

It is found in the cytoplasm. It carries out the reaction alpha-D-xylose = alpha-D-xylulofuranose. The sequence is that of Xylose isomerase from Bifidobacterium longum (strain DJO10A).